The sequence spans 99 residues: DNA-directed RNA polymerase subunit omega (99 aa).

This sequence belongs to the RNA polymerase subunit omega family. As to quaternary structure, the RNAP catalytic core consists of 2 alpha, 1 beta, 1 beta' and 1 omega subunit. When a sigma factor is associated with the core the holoenzyme is formed, which can initiate transcription.

It catalyses the reaction RNA(n) + a ribonucleoside 5'-triphosphate = RNA(n+1) + diphosphate. Promotes RNA polymerase assembly. Latches the N- and C-terminal regions of the beta' subunit thereby facilitating its interaction with the beta and alpha subunits. This chain is DNA-directed RNA polymerase subunit omega, found in Thermus thermophilus (strain ATCC BAA-163 / DSM 7039 / HB27).